The chain runs to 309 residues: Homoserine kinase (309 aa).

Residue 91–101 coordinates ATP; it reads PIGSGLGSSAC.

Belongs to the GHMP kinase family. Homoserine kinase subfamily.

The protein resides in the cytoplasm. The catalysed reaction is L-homoserine + ATP = O-phospho-L-homoserine + ADP + H(+). It functions in the pathway amino-acid biosynthesis; L-threonine biosynthesis; L-threonine from L-aspartate: step 4/5. In terms of biological role, catalyzes the ATP-dependent phosphorylation of L-homoserine to L-homoserine phosphate. This is Homoserine kinase from Pectobacterium carotovorum subsp. carotovorum (strain PC1).